Reading from the N-terminus, the 457-residue chain is NADH-quinone oxidoreductase subunit N (457 aa).

14 helical membrane-spanning segments follow: residues 2-22 (NAII…FIGL), 25-45 (LIYP…ACTF), 60-80 (NYSV…FILF), 92-112 (GDHY…VSFS), 114-134 (MSML…LAGS), 149-169 (FILG…IYGA), 188-208 (FFIG…AVPF), 222-242 (FITA…FYLM), 253-273 (YLSH…NIAA), 283-303 (LAFS…ILTI), 310-330 (FVYL…VQVV), 353-373 (AFVL…AGFF), 382-402 (VIHA…LISV), and 431-451 (VILA…DILL).

Belongs to the complex I subunit 2 family. As to quaternary structure, NDH-1 is composed of 14 different subunits. Subunits NuoA, H, J, K, L, M, N constitute the membrane sector of the complex.

Its subcellular location is the cell inner membrane. The catalysed reaction is a quinone + NADH + 5 H(+)(in) = a quinol + NAD(+) + 4 H(+)(out). NDH-1 shuttles electrons from NADH, via FMN and iron-sulfur (Fe-S) centers, to quinones in the respiratory chain. The immediate electron acceptor for the enzyme in this species is believed to be a menaquinone. Couples the redox reaction to proton translocation (for every two electrons transferred, four hydrogen ions are translocated across the cytoplasmic membrane), and thus conserves the redox energy in a proton gradient. In Cytophaga hutchinsonii (strain ATCC 33406 / DSM 1761 / CIP 103989 / NBRC 15051 / NCIMB 9469 / D465), this protein is NADH-quinone oxidoreductase subunit N.